A 683-amino-acid chain; its full sequence is Dipeptidyl-peptidase 5 (683 aa).

The N-terminal stretch at methionine 1–alanine 19 is a signal peptide. N-linked (GlcNAc...) asparagine glycosylation is found at asparagine 53, asparagine 69, asparagine 103, asparagine 116, asparagine 126, and asparagine 400. Catalysis depends on charge relay system residues serine 535, aspartate 617, and histidine 649.

Belongs to the peptidase S9C family.

The protein localises to the secreted. It is found in the cytoplasm. Its subcellular location is the nucleus. The protein is Dipeptidyl-peptidase 5 of Schizosaccharomyces pombe (strain 972 / ATCC 24843) (Fission yeast).